Here is a 151-residue protein sequence, read N- to C-terminus: Deoxyuridine 5'-triphosphate nucleotidohydrolase (151 aa).

Residues 70-72 (RSG), Asn-83, and 87-89 (TID) each bind substrate.

The protein belongs to the dUTPase family. Requires Mg(2+) as cofactor.

It catalyses the reaction dUTP + H2O = dUMP + diphosphate + H(+). Its pathway is pyrimidine metabolism; dUMP biosynthesis; dUMP from dCTP (dUTP route): step 2/2. Functionally, this enzyme is involved in nucleotide metabolism: it produces dUMP, the immediate precursor of thymidine nucleotides and it decreases the intracellular concentration of dUTP so that uracil cannot be incorporated into DNA. The polypeptide is Deoxyuridine 5'-triphosphate nucleotidohydrolase (Ruegeria pomeroyi (strain ATCC 700808 / DSM 15171 / DSS-3) (Silicibacter pomeroyi)).